The chain runs to 83 residues: Mu-theraphotoxin-Hhn2p (83 aa).

Residues 1–21 form the signal peptide; sequence MKASMYLALAGLVLLFVVGYA. Residues 22–48 constitute a propeptide that is removed on maturation; sequence SESEEKEFPRELLSKIFAVDDFKGEER. 3 disulfide bridges follow: cysteine 50–cysteine 65, cysteine 57–cysteine 70, and cysteine 64–cysteine 77. Residue leucine 81 is modified to Leucine amide.

This sequence belongs to the neurotoxin 10 (Hwtx-1) family. 15 (Hntx-3) subfamily. Monomer. Expressed by the venom gland.

The protein resides in the secreted. Its function is as follows. Lethal neurotoxin. Selectively blocks tetrodotoxin-sensitive voltage-gated sodium channels (Nav). Does not affect tetrodotoxin-resistant voltage-gated sodium channels or calcium channels. This is Mu-theraphotoxin-Hhn2p from Cyriopagopus hainanus (Chinese bird spider).